Reading from the N-terminus, the 192-residue chain is uncharacterized protein (192 aa).

Its subcellular location is the virion. This is an uncharacterized protein from Acanthamoeba polyphaga mimivirus (APMV).